A 319-amino-acid polypeptide reads, in one-letter code: tRNA (guanine(9)-N(1))-methyltransferase Trmt10A (319 aa).

Disordered regions lie at residues 16–87 (LSLN…KRQL) and 275–319 (AKIT…SLDS). A compositionally biased stretch (polar residues) spans 17-33 (SLNNCPGTTPGTPMSKN). The short motif at 35–42 (LKKQRKLA) is the Nuclear localization signal element. Composition is skewed to basic and acidic residues over residues 40–58 (KLAEFAELRKLRREREREK), 78–87 (SRKELKKRQL), and 276–302 (KITDKKEPNHCLEQQDEKQKQEAESDK). Positions 44–67 (FAELRKLRREREREKKKQKRREAK) form a coiled coil. The SAM-dependent MTase TRM10-type domain occupies 83 to 274 (KKRQLADGGK…ETIPMRKGAK (192 aa)).

The protein belongs to the class IV-like SAM-binding methyltransferase superfamily. TRM10 family.

It localises to the nucleus. The protein resides in the nucleolus. Its subcellular location is the chromosome. It carries out the reaction guanosine(9) in tRNA + S-adenosyl-L-methionine = N(1)-methylguanosine(9) in tRNA + S-adenosyl-L-homocysteine + H(+). In terms of biological role, S-adenosyl-L-methionine-dependent guanine N(1)-methyltransferase that catalyzes the formation of N(1)-methylguanine at position 9 (m1G9) in tRNAs. Modulates Mettl3-mediated N6-methyladenosine (m6A) methylation of mRNA 5'-UTRs and 3'-UTRs independent of its methyltransferase activity; influences mRNA stability and protein levels, in particular of Hsp70 chaperone proteins and other stress response proteins. Also regulates stability of transcripts encoding proteins involved in signaling processes and proteins involved in neurogenesis and axon guidance pathways. The chain is tRNA (guanine(9)-N(1))-methyltransferase Trmt10A from Drosophila melanogaster (Fruit fly).